The sequence spans 408 residues: CinA-like protein (408 aa).

Belongs to the CinA family.

The polypeptide is CinA-like protein (Anaeromyxobacter dehalogenans (strain 2CP-C)).